The primary structure comprises 502 residues: ATP synthase subunit alpha (502 aa).

169 to 176 (GDRQTGKT) serves as a coordination point for ATP.

It belongs to the ATPase alpha/beta chains family. As to quaternary structure, F-type ATPases have 2 components, CF(1) - the catalytic core - and CF(0) - the membrane proton channel. CF(1) has five subunits: alpha(3), beta(3), gamma(1), delta(1), epsilon(1). CF(0) has three main subunits: a(1), b(2) and c(9-12). The alpha and beta chains form an alternating ring which encloses part of the gamma chain. CF(1) is attached to CF(0) by a central stalk formed by the gamma and epsilon chains, while a peripheral stalk is formed by the delta and b chains.

The protein localises to the cell membrane. The enzyme catalyses ATP + H2O + 4 H(+)(in) = ADP + phosphate + 5 H(+)(out). Produces ATP from ADP in the presence of a proton gradient across the membrane. The alpha chain is a regulatory subunit. In Streptococcus pyogenes serotype M12 (strain MGAS9429), this protein is ATP synthase subunit alpha.